Reading from the N-terminus, the 340-residue chain is Guanine nucleotide-binding protein G(I)/G(S)/G(T) subunit beta-1 (340 aa).

7 WD repeats span residues 53–83 (GHLA…IIWD), 95–125 (LRSS…PIYN), 141–170 (GHTG…ALWD), 182–212 (GHTG…KLWD), 224–254 (GHES…RLFD), 268–298 (NIIC…NVWD), and 310–340 (GHDN…KIWN).

The protein belongs to the WD repeat G protein beta family. In terms of assembly, g proteins are composed of 3 units, alpha, beta and gamma.

Its function is as follows. Guanine nucleotide-binding proteins (G proteins) are involved as a modulator or transducer in various transmembrane signaling systems. The beta and gamma chains are required for the GTPase activity, for replacement of GDP by GTP, and for G protein-effector interaction. This chain is Guanine nucleotide-binding protein G(I)/G(S)/G(T) subunit beta-1 (gnb1), found in Xenopus laevis (African clawed frog).